The sequence spans 432 residues: N-acylneuraminate cytidylyltransferase (432 aa).

Arg39, Asn49, Arg98, Ser107, Ser109, and Gln130 together coordinate substrate. Arg188 is a catalytic residue.

This sequence belongs to the CMP-NeuNAc synthase family. Homotetramer; the active enzyme is formed by a dimer of dimers. In terms of tissue distribution, expressed in testis, ovary and liver.

The protein resides in the nucleus. The catalysed reaction is an N-acylneuraminate + CTP = a CMP-N-acyl-beta-neuraminate + diphosphate. It participates in amino-sugar metabolism; N-acetylneuraminate metabolism. In terms of biological role, catalyzes the activation of N-acetylneuraminic acid (NeuNAc) to cytidine 5'-monophosphate N-acetylneuraminic acid (CMP-NeuNAc), a substrate required for the addition of sialic acid. In Oncorhynchus mykiss (Rainbow trout), this protein is N-acylneuraminate cytidylyltransferase (cmas).